Here is a 465-residue protein sequence, read N- to C-terminus: Kynureninase (465 aa).

Met1 is modified (N-acetylmethionine). Residues Leu137, Thr138, 165–168 (FPSD), Ser221, Asp250, His253, and Tyr275 contribute to the pyridoxal 5'-phosphate site. N6-(pyridoxal phosphate)lysine is present on Lys276. Residues Trp305 and Asn333 each contribute to the pyridoxal 5'-phosphate site.

It belongs to the kynureninase family. Homodimer. Pyridoxal 5'-phosphate serves as cofactor. In terms of tissue distribution, expressed in all tissues tested (heart, brain placenta, lung, liver, skeletal muscle, kidney and pancreas). Highest levels found in placenta, liver and lung. Expressed in all brain regions.

Its subcellular location is the cytoplasm. The protein resides in the cytosol. The catalysed reaction is L-kynurenine + H2O = anthranilate + L-alanine + H(+). It catalyses the reaction 3-hydroxy-L-kynurenine + H2O = 3-hydroxyanthranilate + L-alanine + H(+). Its pathway is amino-acid degradation; L-kynurenine degradation; L-alanine and anthranilate from L-kynurenine: step 1/1. The protein operates within cofactor biosynthesis; NAD(+) biosynthesis; quinolinate from L-kynurenine: step 2/3. Its activity is regulated as follows. Inhibited by o-methoxybenzoylalanine (OMBA). Its function is as follows. Catalyzes the cleavage of L-kynurenine (L-Kyn) and L-3-hydroxykynurenine (L-3OHKyn) into anthranilic acid (AA) and 3-hydroxyanthranilic acid (3-OHAA), respectively. Has a preference for the L-3-hydroxy form. Also has cysteine-conjugate-beta-lyase activity. The protein is Kynureninase of Homo sapiens (Human).